Consider the following 134-residue polypeptide: Fatty acid-binding protein 5 (134 aa).

The Nuclear localization signal signature appears at 23-33 (KELGVGMAMRK). Hexadecanoate is bound by residues arginine 109 and 129-131 (RVY). N-eicosanoyl ethanolamine-binding residues include arginine 109 and tyrosine 131. A (9Z,12Z)-octadecadienoate-binding site is contributed by 129–131 (RVY).

Belongs to the calycin superfamily. Fatty-acid binding protein (FABP) family. As to quaternary structure, monomer.

It localises to the cytoplasm. It is found in the nucleus. The protein resides in the synapse. The protein localises to the postsynaptic density. Its subcellular location is the secreted. The enzyme catalyses hexadecanoate(out) = hexadecanoate(in). The catalysed reaction is (9Z,12Z)-octadecadienoate(out) = (9Z,12Z)-octadecadienoate(in). It carries out the reaction (9Z)-octadecenoate(out) = (9Z)-octadecenoate(in). Functionally, intracellular carrier for long-chain fatty acids and related active lipids, such as endocannabinoids, that regulate the metabolism and actions of the ligands they bind. In addition to the cytosolic transport, selectively delivers specific fatty acids from the cytosol to the nucleus, wherein they activate nuclear receptors. Delivers retinoic acid to the nuclear receptor peroxisome proliferator-activated receptor delta; which promotes proliferation and survival. May also serve as a synaptic carrier of endocannabinoid at central synapses and thus controls retrograde endocannabinoid signaling. Modulates inflammation by regulating PTGES induction via NF-kappa-B activation, and prostaglandin E2 (PGE2) biosynthesis during inflammation. Has the highest binding affinity for docosahexaenoic acid (DHA) and decreasing relative affinity for eicosapentaenoic acid (EPA), alpha-linolenic acid (ALA), oleic acid, palmitic acid, linoleic acid and stearic acid, respectively. In Pygoscelis papua (Gentoo penguin), this protein is Fatty acid-binding protein 5.